Consider the following 158-residue polypeptide: Cyclic pyranopterin monophosphate synthase (158 aa).

Substrate contacts are provided by residues leucine 75–histidine 77 and methionine 113–glutamate 114. Residue aspartate 128 is part of the active site.

This sequence belongs to the MoaC family. Homohexamer; trimer of dimers.

It catalyses the reaction (8S)-3',8-cyclo-7,8-dihydroguanosine 5'-triphosphate = cyclic pyranopterin phosphate + diphosphate. It functions in the pathway cofactor biosynthesis; molybdopterin biosynthesis. Catalyzes the conversion of (8S)-3',8-cyclo-7,8-dihydroguanosine 5'-triphosphate to cyclic pyranopterin monophosphate (cPMP). This chain is Cyclic pyranopterin monophosphate synthase, found in Histophilus somni (strain 2336) (Haemophilus somnus).